Reading from the N-terminus, the 149-residue chain is D-aminoacyl-tRNA deacylase (149 aa).

Residues 137-138 (GP) carry the Gly-cisPro motif, important for rejection of L-amino acids motif.

This sequence belongs to the DTD family. As to quaternary structure, homodimer.

It localises to the cytoplasm. The enzyme catalyses glycyl-tRNA(Ala) + H2O = tRNA(Ala) + glycine + H(+). It carries out the reaction a D-aminoacyl-tRNA + H2O = a tRNA + a D-alpha-amino acid + H(+). In terms of biological role, an aminoacyl-tRNA editing enzyme that deacylates mischarged D-aminoacyl-tRNAs. Also deacylates mischarged glycyl-tRNA(Ala), protecting cells against glycine mischarging by AlaRS. Acts via tRNA-based rather than protein-based catalysis; rejects L-amino acids rather than detecting D-amino acids in the active site. By recycling D-aminoacyl-tRNA to D-amino acids and free tRNA molecules, this enzyme counteracts the toxicity associated with the formation of D-aminoacyl-tRNA entities in vivo and helps enforce protein L-homochirality. This chain is D-aminoacyl-tRNA deacylase, found in Desulforudis audaxviator (strain MP104C).